Consider the following 347-residue polypeptide: Inosamine-phosphate amidinotransferase 1 (347 aa).

Catalysis depends on residues Asp-179 and His-227. Cys-332 functions as the Amidino-cysteine intermediate in the catalytic mechanism.

This sequence belongs to the amidinotransferase family. As to quaternary structure, homodimer.

The enzyme catalyses 1-amino-1-deoxy-scyllo-inositol 4-phosphate + L-arginine = 1-guanidino-1-deoxy-scyllo-inositol 4-phosphate + L-ornithine. The protein operates within antibiotic biosynthesis; streptomycin biosynthesis. Functionally, catalyzes two non-consecutive transamidination reactions. It converts scyllo-inosamine 4-phosphate into N-amidino-scyllo-inosamine 4-phosphate and N1-amidinostreptamine 6-phosphate into streptidine 6-phosphate. This Streptomyces griseus protein is Inosamine-phosphate amidinotransferase 1 (strB1).